Here is a 219-residue protein sequence, read N- to C-terminus: NADH-ubiquinone oxidoreductase 23 kDa subunit, mitochondrial (219 aa).

2 4Fe-4S ferredoxin-type domains span residues 111–140 (RRYPSGEERCIACKLCEAVCPAQAITIEAE) and 150–179 (TRYDIDMTKCIYCGFCQESCPVDAIVESPN). Positions 120, 123, 126, 130, 159, 162, 165, and 169 each coordinate [4Fe-4S] cluster.

It belongs to the complex I 23 kDa subunit family. Complex I is composed of about 40 different subunits. It depends on [4Fe-4S] cluster as a cofactor.

Its subcellular location is the mitochondrion. It catalyses the reaction a ubiquinone + NADH + 5 H(+)(in) = a ubiquinol + NAD(+) + 4 H(+)(out). In terms of biological role, core subunit of the mitochondrial membrane respiratory chain NADH dehydrogenase (Complex I) that is believed to belong to the minimal assembly required for catalysis. Complex I functions in the transfer of electrons from NADH to the respiratory chain. The immediate electron acceptor for the enzyme is believed to be ubiquinone. May donate electrons to ubiquinone. The protein is NADH-ubiquinone oxidoreductase 23 kDa subunit, mitochondrial (nuo21.3c) of Neurospora crassa (strain ATCC 24698 / 74-OR23-1A / CBS 708.71 / DSM 1257 / FGSC 987).